We begin with the raw amino-acid sequence, 141 residues long: Large ribosomal subunit protein uL11 (141 aa).

The protein belongs to the universal ribosomal protein uL11 family. In terms of assembly, part of the ribosomal stalk of the 50S ribosomal subunit. Interacts with L10 and the large rRNA to form the base of the stalk. L10 forms an elongated spine to which L12 dimers bind in a sequential fashion forming a multimeric L10(L12)X complex. In terms of processing, one or more lysine residues are methylated.

Forms part of the ribosomal stalk which helps the ribosome interact with GTP-bound translation factors. The protein is Large ribosomal subunit protein uL11 of Roseiflexus castenholzii (strain DSM 13941 / HLO8).